A 607-amino-acid chain; its full sequence is LRR receptor kinase SERK2 (607 aa).

An N-terminal signal peptide occupies residues 1–21 (MRELRVAVLIIAVSLPSFSAS). At 22-219 (DRQGDALYDM…QSGSHSSKIG (198 aa)) the chain is on the extracellular side. Residues N36 and N110 are each glycosylated (N-linked (GlcNAc...) asparagine). LRR repeat units follow at residues 87–110 (LKYLTVLSLAGNRISGGIPEQFGN), 111–135 (LSSLTSLDLEDNLLVGEIPASLGQL), 136–159 (SKLQLLILSDNNFNGSIPDSLAKI), and 160–183 (SSLTDIRLAYNNLSGQIPGPLFQV). N-linked (GlcNAc...) asparagine glycosylation is found at N149, N171, N187, and N206. Residues 220–240 (IVLGTVGGVIGLLIVAALFLF) traverse the membrane as a helical segment. Topologically, residues 241–607 (CKGRRKSHLR…QEAIELSGGR (367 aa)) are cytoplasmic. Residues 284–563 (FSERNVLGQG…VVRMLEGEGL (280 aa)) form the Protein kinase domain. ATP contacts are provided by residues 290–298 (LGQGGFGKV) and K312. Residue D411 is the Proton acceptor of the active site.

This sequence belongs to the protein kinase superfamily. Ser/Thr protein kinase family.

Its subcellular location is the cell membrane. The catalysed reaction is L-seryl-[protein] + ATP = O-phospho-L-seryl-[protein] + ADP + H(+). It catalyses the reaction L-threonyl-[protein] + ATP = O-phospho-L-threonyl-[protein] + ADP + H(+). Functionally, may be involved in the regulation of plant growth through the brassinosteroid (BR) signaling pathway. In Oryza sativa subsp. japonica (Rice), this protein is LRR receptor kinase SERK2.